The primary structure comprises 213 residues: Orotate phosphoribosyltransferase (213 aa).

Lys26 provides a ligand contact to 5-phospho-alpha-D-ribose 1-diphosphate. 34-35 (FF) is a binding site for orotate. Residues 72–73 (YK), Arg98, Lys99, Lys102, and 123–131 (DDVISAGTS) contribute to the 5-phospho-alpha-D-ribose 1-diphosphate site. Ser127 and Arg155 together coordinate orotate.

It belongs to the purine/pyrimidine phosphoribosyltransferase family. PyrE subfamily. Homodimer. It depends on Mg(2+) as a cofactor.

The enzyme catalyses orotidine 5'-phosphate + diphosphate = orotate + 5-phospho-alpha-D-ribose 1-diphosphate. It participates in pyrimidine metabolism; UMP biosynthesis via de novo pathway; UMP from orotate: step 1/2. Catalyzes the transfer of a ribosyl phosphate group from 5-phosphoribose 1-diphosphate to orotate, leading to the formation of orotidine monophosphate (OMP). This chain is Orotate phosphoribosyltransferase, found in Neisseria gonorrhoeae (strain ATCC 700825 / FA 1090).